Consider the following 397-residue polypeptide: Argininosuccinate synthase (397 aa).

9 to 17 serves as a coordination point for ATP; sequence AYSGGLDTS. Residue Y87 participates in L-citrulline binding. G117 is an ATP binding site. L-aspartate is bound by residues T119, N123, and D124. An L-citrulline-binding site is contributed by N123. Residues R127, S175, S184, E257, and Y269 each coordinate L-citrulline.

Belongs to the argininosuccinate synthase family. Type 1 subfamily. Homotetramer.

It localises to the cytoplasm. The catalysed reaction is L-citrulline + L-aspartate + ATP = 2-(N(omega)-L-arginino)succinate + AMP + diphosphate + H(+). It participates in amino-acid biosynthesis; L-arginine biosynthesis; L-arginine from L-ornithine and carbamoyl phosphate: step 2/3. This chain is Argininosuccinate synthase, found in Dictyoglomus thermophilum (strain ATCC 35947 / DSM 3960 / H-6-12).